A 590-amino-acid chain; its full sequence is Arginine--tRNA ligase (590 aa).

The 'HIGH' region motif lies at 138–148 (ANPTGPLHIGH).

This sequence belongs to the class-I aminoacyl-tRNA synthetase family. In terms of assembly, monomer.

The protein localises to the cytoplasm. The enzyme catalyses tRNA(Arg) + L-arginine + ATP = L-arginyl-tRNA(Arg) + AMP + diphosphate. This is Arginine--tRNA ligase from Orientia tsutsugamushi (strain Boryong) (Rickettsia tsutsugamushi).